Consider the following 412-residue polypeptide: MAEPLRGRGPRSRGGRGARRARGARGRCPRARQSPARLIPDTVLVDLVSDSDEEVLEVADPVEVPVARLPAPAKPEQDSDSDSEGAAEGPAGAPRTLVRRRRRRLLDPGEAPVVPVYSGKVQSSLNLIPDNSSLLKLCPSEPEDEADLTNSGSSPSEDDALPSGSPWRKKLRKKCEKEEKKMEEFPDQDISPLPQPSSRNKSRKHTEALQKLREVNKRLQDLRSCLSPKQHQSPALQSTDDEVVLVEGPVLPQSSRLFTLKIRCRADLVRLPVRMSEPLQNVVDHMANHLGVSPNRILLLFGESELSPTATPSTLKLGVADIIDCVVLASSSEATETSQELRLRVQGKEKHQMLEISLSPDSPLKVLMSHYEEAMGLSGHKLSFFFDGTKLSGKELPADLGLESGDLIEVWG.

Positions 1-38 (MAEPLRGRGPRSRGGRGARRARGARGRCPRARQSPARL) are disordered. A compositionally biased stretch (basic residues) spans 8–30 (RGPRSRGGRGARRARGARGRCPR). Phosphoserine occurs at positions 49, 51, 79, 81, and 83. The tract at residues 58-115 (VADPVEVPVARLPAPAKPEQDSDSDSEGAAEGPAGAPRTLVRRRRRRLLDPGEAPVVP) is disordered. The segment covering 86–96 (AAEGPAGAPRT) has biased composition (low complexity). Serine 118 carries the phosphoserine modification. Lysine 120 is covalently cross-linked (Glycyl lysine isopeptide (Lys-Gly) (interchain with G-Cter in SUMO2)). Residues 136–206 (KLCPSEPEDE…SSRNKSRKHT (71 aa)) form a disordered region. Residues 168 to 227 (RKKLRKKCEKEEKKMEEFPDQDISPLPQPSSRNKSRKHTEALQKLREVNKRLQDLRSCLS) are a coiled coil. Positions 175 to 184 (CEKEEKKMEE) are enriched in basic and acidic residues. Residues serine 191, serine 197, and serine 307 each carry the phosphoserine modification. 2 positions are modified to phosphothreonine: threonine 309 and threonine 311. In terms of domain architecture, Ubiquitin-like spans 341–412 (LRLRVQGKEK…ESGDLIEVWG (72 aa)). Phosphoserine is present on residues serine 362 and serine 383.

Interacts with NFATC2, TRAF1, TRAF2 and PRMT1. Interacts with UBE2I/UBC9. Post-translationally, methylation at the N-terminus by PRMT1 modulates interaction with the NFAT complex and results in augmented cytokine production. In terms of tissue distribution, highest level detected in spleen, thymus and testis.

The protein resides in the nucleus. The protein localises to the cytoplasm. Functionally, in T-helper 2 (Th2) cells, regulates the magnitude of NFAT-driven transcription of a specific subset of cytokine genes, including IL3, IL4, IL5 and IL13, but not IL2. Recruits PRMT1 to the IL4 promoter; this leads to enhancement of histone H4 'Arg-3'-methylation and facilitates subsequent histone acetylation at the IL4 locus, thus promotes robust cytokine expression. Down-regulates formation of poly-SUMO chains by UBE2I/UBC9. The chain is NFATC2-interacting protein (Nfatc2ip) from Mus musculus (Mouse).